The following is a 587-amino-acid chain: Pescadillo homolog (587 aa).

Residues Leu-267 to Asn-306 are a coiled coil. The disordered stretch occupies residues Ile-290 to Glu-311. A compositionally biased stretch (acidic residues) spans Glu-295–Glu-311. The 100-residue stretch at Ser-335–Ala-434 folds into the BRCT domain. Positions Thr-437–Asn-587 are disordered. The span at Lys-459–Asp-494 shows a compositional bias: acidic residues. Residues Glu-470 to Asn-587 adopt a coiled-coil conformation. Basic and acidic residues-rich tracts occupy residues Ser-529–Lys-541, Ile-559–Leu-569, and Lys-578–Asn-587.

This sequence belongs to the pescadillo family. Component of the NOP7 complex, composed of ERB1, NOP7 and YTM1. The complex is held together by ERB1, which interacts with NOP7 via its N-terminal domain and with YTM1 via a high-affinity interaction between the seven-bladed beta-propeller domains of the 2 proteins. The NOP7 complex associates with the 66S pre-ribosome.

The protein localises to the nucleus. Its subcellular location is the nucleolus. It localises to the nucleoplasm. Component of the NOP7 complex, which is required for maturation of the 25S and 5.8S ribosomal RNAs and formation of the 60S ribosome. Required for the transition from hyphal to yeast growth. The sequence is that of Pescadillo homolog from Candida albicans (strain SC5314 / ATCC MYA-2876) (Yeast).